The primary structure comprises 999 residues: Probable K(+)/H(+) antiporter subunit A/B (999 aa).

The interval 1-20 is disordered; sequence MTRPASVLAGPKSRPPIHSQ. 24 helical membrane-spanning segments follow: residues 31–48, 63–85, 106–128, 138–160, 162–181, 191–213, 233–255, 270–292, 299–321, 336–358, 389–411, 442–464, 488–510, 530–552, 604–621, 636–653, 660–682, 686–708, 729–751, 788–807, 846–868, 878–900, 913–935, and 955–977; these read LLSV…IAIF, AIAL…GGVL, FAWL…ARYY, FFAL…NLIL, AVFW…YWHH, MALT…IGKI, PLYG…QFPF, SAYL…FWPV, WFWI…AIFQ, LGLI…VFHI, GLFH…MAGV, YVAT…GVFF, FLVL…FLHT, GWNI…YFLM, RLLV…LLLG, AFAL…GSAY, LASL…WLSA, AVTQ…RWLP, LRDL…TVMT, TLGE…ALLL, FIPA…FLFL, FAAG…TRWV, SIGL…PFLT, and ILFD…IALA.

In the N-terminal section; belongs to the CPA3 antiporters (TC 2.A.63) subunit A family. The protein in the C-terminal section; belongs to the CPA3 antiporters (TC 2.A.63) subunit B family. As to quaternary structure, may form a heterooligomeric complex that consists of six subunits: PhaAB, PhaC, PhaD, PhaE, PhaF and PhaG.

It localises to the cell membrane. In terms of biological role, part of a K(+) efflux system which is required for the adaptation of R.meliloti to alkaline pH as well as for the infection process during symbiotic nodule development. In Rhizobium meliloti (strain 1021) (Ensifer meliloti), this protein is Probable K(+)/H(+) antiporter subunit A/B (phaAB).